A 296-amino-acid polypeptide reads, in one-letter code: Protoheme IX farnesyltransferase (296 aa).

9 consecutive transmembrane segments (helical) span residues 27 to 47 (IMYLVVFTASTGMIMAPGTIH), 48 to 68 (PLIGLVSALCIAMGSGAAGAL), 98 to 118 (ALECGLALSLLSVFIMSLTVN), 120 to 140 (VSAILLACSIAFYAVVYTMVL), 148 to 168 (IVIGGIAGAFPPVIGWTSVTG), 175 to 195 (LLLFMIIFLWTPPHFWALSLL), 219 to 239 (HIMGYSLLLFIVALLPGLYVA), 242 to 262 (VLYEIIATSLGAVFLTHAYCL), and 274 to 294 (CMGLFSFSIYYLFLIFSAIAL).

This sequence belongs to the UbiA prenyltransferase family. Protoheme IX farnesyltransferase subfamily.

It is found in the cell inner membrane. It catalyses the reaction heme b + (2E,6E)-farnesyl diphosphate + H2O = Fe(II)-heme o + diphosphate. It participates in porphyrin-containing compound metabolism; heme O biosynthesis; heme O from protoheme: step 1/1. In terms of biological role, converts heme B (protoheme IX) to heme O by substitution of the vinyl group on carbon 2 of heme B porphyrin ring with a hydroxyethyl farnesyl side group. In Anaplasma phagocytophilum (strain HZ), this protein is Protoheme IX farnesyltransferase.